The following is a 248-amino-acid chain: DNA-directed RNA polymerase subunit Rpo3 (248 aa).

Belongs to the archaeal Rpo3/eukaryotic RPB3 RNA polymerase subunit family. As to quaternary structure, part of the RNA polymerase complex.

Its subcellular location is the cytoplasm. The catalysed reaction is RNA(n) + a ribonucleoside 5'-triphosphate = RNA(n+1) + diphosphate. In terms of biological role, DNA-dependent RNA polymerase (RNAP) catalyzes the transcription of DNA into RNA using the four ribonucleoside triphosphates as substrates. This chain is DNA-directed RNA polymerase subunit Rpo3, found in Halobacterium salinarum (strain ATCC 29341 / DSM 671 / R1).